The primary structure comprises 416 residues: Glutamyl-tRNA reductase (416 aa).

Substrate contacts are provided by residues 49 to 52 (TCNR), Ser-105, 110 to 112 (EPQ), and Gln-116. Cys-50 (nucleophile) is an active-site residue. NADP(+) is bound at residue 185 to 190 (GAGETI).

This sequence belongs to the glutamyl-tRNA reductase family. In terms of assembly, homodimer.

The catalysed reaction is (S)-4-amino-5-oxopentanoate + tRNA(Glu) + NADP(+) = L-glutamyl-tRNA(Glu) + NADPH + H(+). It functions in the pathway porphyrin-containing compound metabolism; protoporphyrin-IX biosynthesis; 5-aminolevulinate from L-glutamyl-tRNA(Glu): step 1/2. In terms of biological role, catalyzes the NADPH-dependent reduction of glutamyl-tRNA(Glu) to glutamate 1-semialdehyde (GSA). The protein is Glutamyl-tRNA reductase of Shewanella frigidimarina (strain NCIMB 400).